The sequence spans 153 residues: Small ribosomal subunit protein uS9 (153 aa).

Residues 122 to 153 (KKAGFLTRDPRSTERKKYGLKKARKAPQYSKR) are disordered. Over residues 129–138 (RDPRSTERKK) the composition is skewed to basic and acidic residues. The span at 139–153 (YGLKKARKAPQYSKR) shows a compositional bias: basic residues.

This sequence belongs to the universal ribosomal protein uS9 family.

The chain is Small ribosomal subunit protein uS9 (rpsI) from Mycobacterium leprae (strain TN).